The following is a 174-amino-acid chain: RNA pyrophosphohydrolase (174 aa).

In terms of domain architecture, Nudix hydrolase spans 6 to 149 (GFRANVGIII…KRDVYRKVMK (144 aa)). A Nudix box motif is present at residues 38-59 (GGVDDGETAEEAMYRELYEEVG).

Belongs to the Nudix hydrolase family. RppH subfamily. Requires a divalent metal cation as cofactor.

Its function is as follows. Accelerates the degradation of transcripts by removing pyrophosphate from the 5'-end of triphosphorylated RNA, leading to a more labile monophosphorylated state that can stimulate subsequent ribonuclease cleavage. In Shewanella baltica (strain OS223), this protein is RNA pyrophosphohydrolase.